The chain runs to 440 residues: MRRALRELAARHGRVLAASWRQRHRRPAGWFDPVETEFLPSALSLQERPISPTARWLARILMALAAGALVWSVVGKTEIVVHAAGKVVPVGQSKIIAASETGRVARVLVADNSRVAAGDVLLRLDAGVTEAEERKWRVQAAQARQDEARSRAMIRALDTGRAPVLAELPADPGMMAAQSYLDSQYADYQAQLRSIEAAIATYRRELGLVTQIAHAHRGLRRDGDVSQQAYLEKEQARMTLEGRLRQSEAQRAALQTQTRRQAFETLVLARKLAAQAEQEIARTSAQRSRLVLTAPVDGVVQQLVALTEGTAVAATQPLMMVVPSGAGIQVQAQLDSKDIGFVRAGAPATVKVGAYDYTKYGTLEGKVLYVSPDTVVDDRQQHSYRVTIALAHPALEVDGKPRLLKEGMAVQADIRTGSRRLIEYLLSPVARHAGESLGER.

At 1 to 55 the chain is on the cytoplasmic side; that stretch reads MRRALRELAARHGRVLAASWRQRHRRPAGWFDPVETEFLPSALSLQERPISPTAR. Residues 56-75 traverse the membrane as a helical segment; it reads WLARILMALAAGALVWSVVG. Topologically, residues 76-440 are periplasmic; sequence KTEIVVHAAG…RHAGESLGER (365 aa).

The protein belongs to the membrane fusion protein (MFP) (TC 8.A.1) family.

It localises to the cell inner membrane. Its function is as follows. CyaD is necessary for transport of calmodulin-sensitive adenylate cyclase-hemolysin (cyclolysin). This is Protein CyaD (cyaD) from Bordetella pertussis (strain ATCC 9797 / DSM 5571 / CCUG 30873 / LMG 14455 / NCTC 10739 / 18323).